Consider the following 278-residue polypeptide: Large ribosomal subunit protein uL2 (278 aa).

The tract at residues 201-278 (HGNINDGKAG…IMRSRHQRKK (78 aa)) is disordered. The span at 210–221 (GRSRWRGKKPHV) shows a compositional bias: basic residues.

It belongs to the universal ribosomal protein uL2 family. In terms of assembly, part of the 50S ribosomal subunit. Forms a bridge to the 30S subunit in the 70S ribosome.

Functionally, one of the primary rRNA binding proteins. Required for association of the 30S and 50S subunits to form the 70S ribosome, for tRNA binding and peptide bond formation. It has been suggested to have peptidyltransferase activity; this is somewhat controversial. Makes several contacts with the 16S rRNA in the 70S ribosome. The chain is Large ribosomal subunit protein uL2 from Rhizobium rhizogenes (strain K84 / ATCC BAA-868) (Agrobacterium radiobacter).